Reading from the N-terminus, the 126-residue chain is UPF0102 protein gll3754 (126 aa).

Belongs to the UPF0102 family.

This Gloeobacter violaceus (strain ATCC 29082 / PCC 7421) protein is UPF0102 protein gll3754.